Consider the following 92-residue polypeptide: Ictacalcin (92 aa).

EF-hand domains follow at residues 12 to 47 (ISTF…AFGN) and 49 to 84 (SDQA…TTML). T27, E32, D62, N64, D66, and E73 together coordinate Ca(2+).

Belongs to the S-100 family. Abundant in epithelial cells of olfactory rosette, barbel, skin and gill but not brain or muscle.

Functionally, plays an important role in catfish calcium homeostasis. This is Ictacalcin from Ictalurus punctatus (Channel catfish).